Here is a 158-residue protein sequence, read N- to C-terminus: NAD(P)H-quinone oxidoreductase subunit N (158 aa).

The protein belongs to the complex I NdhN subunit family. NDH-1 can be composed of about 15 different subunits; different subcomplexes with different compositions have been identified which probably have different functions.

The protein resides in the cellular thylakoid membrane. It catalyses the reaction a plastoquinone + NADH + (n+1) H(+)(in) = a plastoquinol + NAD(+) + n H(+)(out). The catalysed reaction is a plastoquinone + NADPH + (n+1) H(+)(in) = a plastoquinol + NADP(+) + n H(+)(out). In terms of biological role, NDH-1 shuttles electrons from an unknown electron donor, via FMN and iron-sulfur (Fe-S) centers, to quinones in the respiratory and/or the photosynthetic chain. The immediate electron acceptor for the enzyme in this species is believed to be plastoquinone. Couples the redox reaction to proton translocation, and thus conserves the redox energy in a proton gradient. Cyanobacterial NDH-1 also plays a role in inorganic carbon-concentration. This is NAD(P)H-quinone oxidoreductase subunit N from Synechococcus elongatus (strain ATCC 33912 / PCC 7942 / FACHB-805) (Anacystis nidulans R2).